The sequence spans 146 residues: Hemoglobin subunit beta (146 aa).

The Globin domain maps to 2–146 (HWTAEEKQLI…VAHALARKYH (145 aa)). Residues His63 and His92 each coordinate heme b.

Belongs to the globin family. As to quaternary structure, heterotetramer of two alpha chains and two beta chains. In terms of tissue distribution, red blood cells.

Functionally, involved in oxygen transport from the lung to the various peripheral tissues. The sequence is that of Hemoglobin subunit beta (HBB) from Ara ararauna (Blue-and-yellow macaw).